The sequence spans 122 residues: Large ribosomal subunit protein bL12 (122 aa).

The protein belongs to the bacterial ribosomal protein bL12 family. As to quaternary structure, homodimer. Part of the ribosomal stalk of the 50S ribosomal subunit. Forms a multimeric L10(L12)X complex, where L10 forms an elongated spine to which 2 to 4 L12 dimers bind in a sequential fashion. Binds GTP-bound translation factors.

Functionally, forms part of the ribosomal stalk which helps the ribosome interact with GTP-bound translation factors. Is thus essential for accurate translation. This Shewanella denitrificans (strain OS217 / ATCC BAA-1090 / DSM 15013) protein is Large ribosomal subunit protein bL12.